The sequence spans 257 residues: Ribonuclease HII (257 aa).

An RNase H type-2 domain is found at 72-257 (TYIAGIDEVG…FAPIKDMIQK (186 aa)). A divalent metal cation contacts are provided by D78, E79, and D170.

The protein belongs to the RNase HII family. Mn(2+) serves as cofactor. Mg(2+) is required as a cofactor.

The protein localises to the cytoplasm. The enzyme catalyses Endonucleolytic cleavage to 5'-phosphomonoester.. In terms of biological role, endonuclease that specifically degrades the RNA of RNA-DNA hybrids. The chain is Ribonuclease HII from Bacillus cereus (strain B4264).